We begin with the raw amino-acid sequence, 209 residues long: Uracil phosphoribosyltransferase (209 aa).

5-phospho-alpha-D-ribose 1-diphosphate contacts are provided by residues Arg-79, Arg-104, and Asp-131 to Ser-139. Residues Ile-194 and Gly-199 to Ala-201 each bind uracil. Residue Asp-200 participates in 5-phospho-alpha-D-ribose 1-diphosphate binding.

The protein belongs to the UPRTase family. Mg(2+) is required as a cofactor.

The enzyme catalyses UMP + diphosphate = 5-phospho-alpha-D-ribose 1-diphosphate + uracil. It functions in the pathway pyrimidine metabolism; UMP biosynthesis via salvage pathway; UMP from uracil: step 1/1. With respect to regulation, allosterically activated by GTP. Functionally, catalyzes the conversion of uracil and 5-phospho-alpha-D-ribose 1-diphosphate (PRPP) to UMP and diphosphate. The protein is Uracil phosphoribosyltransferase of Clostridium perfringens (strain ATCC 13124 / DSM 756 / JCM 1290 / NCIMB 6125 / NCTC 8237 / Type A).